The chain runs to 198 residues: MEAFHTHSGIGVPLRRSNVDTDQIIPAVFLKRVTRTGFEDGLFAGWRSDPAFVLNLSPFDRGSVLVAGPDFGTGSSREHAVWALMDYGFRVVISSRFGDIFRGNAGKAGLLAAEVAQDDVELLWKLIEQSPGLEITANLQDRIITAATVVLPFKIDDHSAWRLLEGLDDIALTLRKLDEIEAFEGACAYWKPRTLPAP.

Belongs to the LeuD family. LeuD type 1 subfamily. In terms of assembly, heterodimer of LeuC and LeuD.

The catalysed reaction is (2R,3S)-3-isopropylmalate = (2S)-2-isopropylmalate. The protein operates within amino-acid biosynthesis; L-leucine biosynthesis; L-leucine from 3-methyl-2-oxobutanoate: step 2/4. Functionally, catalyzes the isomerization between 2-isopropylmalate and 3-isopropylmalate, via the formation of 2-isopropylmaleate. This chain is 3-isopropylmalate dehydratase small subunit (leuD), found in Mycobacterium bovis (strain ATCC BAA-935 / AF2122/97).